Reading from the N-terminus, the 452-residue chain is GTPase Der (452 aa).

EngA-type G domains lie at 4–169 and 177–352; these read PIVA…PAPQ and IKVA…QEHR. GTP contacts are provided by residues 10-17, 57-61, 120-123, 183-190, 230-234, and 295-298; these read GRPNVGKS, DTGGL, NKCE, DTAGI, and NKWD. A KH-like domain is found at 353–439; that stretch reads RRVTTAVINE…IRLFWRGKKV (87 aa).

It belongs to the TRAFAC class TrmE-Era-EngA-EngB-Septin-like GTPase superfamily. EngA (Der) GTPase family. Associates with the 50S ribosomal subunit.

Its function is as follows. GTPase that plays an essential role in the late steps of ribosome biogenesis. The protein is GTPase Der of Synechocystis sp. (strain ATCC 27184 / PCC 6803 / Kazusa).